We begin with the raw amino-acid sequence, 240 residues long: DISARM protein DrmC (240 aa).

Positions 174-201 (GYSSLHAKVIMVDEEKAFVSSANLSYNG) constitute a PLD phosphodiesterase domain. Residues histidine 179, lysine 181, and aspartate 186 contribute to the active site.

Belongs to the phospholipase D family.

It localises to the cytoplasm. In terms of biological role, component of antiviral defense system DISARM (defense island system associated with restriction-modification), composed of DrmE, DrmA, DrmB, DrmC and DrmMII. DISARM is probably a multi-gene restriction module, this subunit is probably a phospholipase or nuclease. Expression of DISARM in B.subtilis (strain BEST7003) confers resistance to phages Nf, phi29, phi105, phi3T, SPO1, SPR and SPP1. Protection is over 10(7)-fold against phi3T, 10(4)-10(5)-fold against Nf, phi29, phi105 and SPR, 100-fold against SPO1 and 10-fold against SPP1. DISARM does not interfere with phage adsorption, but instead interferes with (phi3T) DNA replication early in its cycle, preventing replication, circularization and lysogeny and probably causes phage DNA degradation (DNA is degraded in SPP1-infected cells). The protein is DISARM protein DrmC of Bacillus paralicheniformis (strain ATCC 9945a / NCIMB 11709 / CD-2).